The sequence spans 365 residues: MTVRRVNVVILVLLVVAFLIVLHRNLLNLNDFLNQETSDTVPGMILPFETDFLLGRKAMRSGEEIPVLITAPEERLGAAVTAMNSIYRNSKANVVFNIVTLNESVVHLSTWLSKTDLKHKIIVFDPSILLGKIPTDAQKMETVRPLTFARFYMPAFLPDAEKAIYLDDDVIVQGDIRELFNTSLKSGHVAAFSEDCDSASSKGIVRGAGNQNSYIGYLDFKKEAIKKLGMRANTCSFNPGVFVANLTEWKQQNVTSQLEFWMERNAKEDLYSKTLADCMTTPPMLIVFYKHHSNIDPMWNVRHLGATGAGNRYSAQFVKAAKLLHWNGHYKPWGRTSSFSDIWDKWYIPDPTGKFHPIRKHVEEK.

Topologically, residues 1–4 are cytoplasmic; that stretch reads MTVR. Residues 5 to 22 traverse the membrane as a helical; Signal-anchor for type II membrane protein segment; it reads RVNVVILVLLVVAFLIVL. Residues 23 to 365 lie on the Lumenal side of the membrane; the sequence is HRNLLNLNDF…HPIRKHVEEK (343 aa). Asn102, Asn181, Asn245, and Asn253 each carry an N-linked (GlcNAc...) asparagine glycan.

The protein belongs to the glycosyltransferase 8 family.

Its subcellular location is the membrane. This chain is Glycosyltransferase 8 domain-containing protein 1 (glt8d1), found in Danio rerio (Zebrafish).